Reading from the N-terminus, the 346-residue chain is Sesquiterpene synthase Agr1 (346 aa).

Residues Asp-98, Asn-234, Ser-238, and Glu-242 each coordinate Mg(2+). Positions 98 to 102 (DNLSD) match the DDXXD motif motif. Positions 322 and 323 each coordinate (2E,6E)-farnesyl diphosphate.

The protein belongs to the terpene synthase family. Mg(2+) serves as cofactor.

It catalyses the reaction (2E,6E)-farnesyl diphosphate = delta-cadinene + diphosphate. The catalysed reaction is (2E,6E)-farnesyl diphosphate = alpha-muurolene + diphosphate. It carries out the reaction (2E,6E)-farnesyl diphosphate = gamma-muurolene + diphosphate. The enzyme catalyses (2E,6E)-farnesyl diphosphate = alpha-selinene + diphosphate. Its function is as follows. Terpene cyclase that catalyzes the cyclization of farnesyl diphosphate (FPP) to various sesquiterpenes, including alpha-muurolene, gamma-muurolene, alpha-selinene, beta-selinene, delta-cadinene, alpha-cadinol and delta-cadinol. Delta-cadinene is the major product of Agr1. This Cyclocybe aegerita (Black poplar mushroom) protein is Sesquiterpene synthase Agr1.